The chain runs to 367 residues: Alginate lyase (367 aa).

An N-terminal signal peptide occupies residues 1 to 24 (MTIINRKTAPALLALALFGGAAQA). Residues 63–64 (SK), 136–137 (HT), and Tyr-254 contribute to the substrate site.

This sequence belongs to the polysaccharide lyase 5 family.

It is found in the periplasm. It catalyses the reaction Eliminative cleavage of alginate to give oligosaccharides with 4-deoxy-alpha-L-erythro-hex-4-enuronosyl groups at their non-reducing ends and beta-D-mannuronate at their reducing end.. Its function is as follows. Catalyzes the depolymerization of alginate by cleaving the beta-1,4 glycosidic bond between two adjacent sugar residues via a beta-elimination mechanism. May serve to degrade mislocalized alginate that is trapped in the periplasmic space. The sequence is that of Alginate lyase from Pseudomonas entomophila (strain L48).